Here is a 401-residue protein sequence, read N- to C-terminus: Calreticulin (401 aa).

The signal sequence occupies residues 1-18 (MRKELWLGLLLSSQAVLS). Cysteines 103 and 134 form a disulfide. Residues Tyr107, Lys109, Tyr125, and Asp132 each contribute to the an alpha-D-glucoside site. 7 repeat units span residues 187–198 (KESGTLEEDWEI), 206–217 (DPEDKKPADWVD), 223–234 (DPEDKKPEDWDK), 241–252 (DPDATQPDDWDE), 256–266 (GKWEAPMISNP), 270–280 (GEWKAKKIPNP), and 284–294 (GVWKPRDIPNP). The tract at residues 187–252 (KESGTLEEDW…DATQPDDWDE (66 aa)) is 4 X approximate repeats. Composition is skewed to basic and acidic residues over residues 199-214 (LKPK…KPAD) and 224-236 (PEDK…DKEP). The segment at 199-263 (LKPKTIPDPE…EDGKWEAPMI (65 aa)) is disordered. Acidic residues predominate over residues 246–256 (QPDDWDEEEDG). The 3 X approximate repeats stretch occupies residues 256-294 (GKWEAPMISNPKYKGEWKAKKIPNPAYKGVWKPRDIPNP). An alpha-D-glucoside is bound at residue Asp314. Residues 341–401 (DQTNGATKDA…EEEDDKKDEL (61 aa)) form a disordered region. The segment covering 348–381 (KDAEKKAFDSAEADKRKKEEDERKKQEEEEKKTA) has biased composition (basic and acidic residues). Positions 382 to 401 (EEDEDDDDEEEEEDDKKDEL) are enriched in acidic residues. The short motif at 398 to 401 (KDEL) is the Prevents secretion from ER element.

It belongs to the calreticulin family.

The protein resides in the endoplasmic reticulum lumen. Its function is as follows. Molecular calcium-binding chaperone promoting folding, oligomeric assembly and quality control in the ER via the calreticulin/calnexin cycle. This lectin may interact transiently with almost all of the monoglucosylated glycoproteins that are synthesized in the ER. The polypeptide is Calreticulin (Euglena gracilis).